A 264-amino-acid polypeptide reads, in one-letter code: JmjC domain-containing protein 8 (264 aa).

The N-terminal stretch at 1–23 (MAPASRLLALWALAAVALPGSGA) is a signal peptide. N-linked (GlcNAc...) asparagine glycans are attached at residues Asn130, Asn140, and Asn209. Residues 131–264 (DTLYFFGDNN…TSVFISTFLG (134 aa)) form the JmjC domain.

As to quaternary structure, oligomer. Dimer. Interacts with PKM; regulates angiogenesis and metabolism. Post-translationally, N-glycosylated.

The protein localises to the endoplasmic reticulum lumen. The protein resides in the cytoplasm. Functionally, functions as a positive regulator of TNF-induced NF-kappa-B signaling. Regulates angiogenesis and cellular metabolism through interaction with PKM. In Homo sapiens (Human), this protein is JmjC domain-containing protein 8.